The chain runs to 62 residues: UPF0434 protein RSc2531 (62 aa).

The protein belongs to the UPF0434 family.

The chain is UPF0434 protein RSc2531 from Ralstonia nicotianae (strain ATCC BAA-1114 / GMI1000) (Ralstonia solanacearum).